A 170-amino-acid polypeptide reads, in one-letter code: SKP1-like protein 16 (170 aa).

Residues 109–167 form an interaction with the F-box domain of F-box proteins region; that stretch reads ILAVNYLNVQDLLGLTCQTVADHMKDMSPEEVRELFNIENDYTPEEEDAIRKENAWAFE.

The protein belongs to the SKP1 family. Part of a SCF (SKP1-cullin-F-box) protein ligase complex. Interacts with CPR1/CPR30, At3g61590 and At4g11590. As to expression, mainly detected in the siliques.

The protein resides in the nucleus. It functions in the pathway protein modification; protein ubiquitination. Functionally, involved in ubiquitination and subsequent proteasomal degradation of target proteins. Together with CUL1, RBX1 and a F-box protein, it forms a SCF E3 ubiquitin ligase complex. The functional specificity of this complex depends on the type of F-box protein. In the SCF complex, it serves as an adapter that links the F-box protein to CUL1. The protein is SKP1-like protein 16 (ASK16) of Arabidopsis thaliana (Mouse-ear cress).